Here is a 357-residue protein sequence, read N- to C-terminus: Thiamine thiazole synthase 3, chloroplastic (357 aa).

The N-terminal 51 residues, 1–51, are a transit peptide targeting the chloroplast; that stretch reads MSISAAGVATGLGANVELKSNVGSSSSSVAGVRLFTSRKAQLRRCAAPATS. Substrate is bound by residues alanine 103, 123–124, glycine 131, and alanine 196; that span reads EQ. Cysteine 225 is modified (2,3-didehydroalanine (Cys)). Substrate contacts are provided by residues aspartate 227, histidine 242, methionine 294, and 304–306; that span reads RMG.

It belongs to the THI4 family. As to quaternary structure, homooctamer. Fe cation serves as cofactor. During the catalytic reaction, a sulfide is transferred from Cys-225 to a reaction intermediate, generating a dehydroalanine residue.

It localises to the plastid. The protein resides in the chloroplast. The catalysed reaction is [ADP-thiazole synthase]-L-cysteine + glycine + NAD(+) = [ADP-thiazole synthase]-dehydroalanine + ADP-5-ethyl-4-methylthiazole-2-carboxylate + nicotinamide + 3 H2O + 2 H(+). In terms of biological role, involved in biosynthesis of the thiamine precursor thiazole. Catalyzes the conversion of NAD and glycine to adenosine diphosphate 5-(2-hydroxyethyl)-4-methylthiazole-2-carboxylic acid (ADT), an adenylated thiazole intermediate. The reaction includes an iron-dependent sulfide transfer from a conserved cysteine residue of the protein to a thiazole intermediate. The enzyme can only undergo a single turnover, which suggests it is a suicide enzyme. May have additional roles in adaptation to various stress conditions and in DNA damage tolerance. The polypeptide is Thiamine thiazole synthase 3, chloroplastic (Physcomitrium patens (Spreading-leaved earth moss)).